Consider the following 277-residue polypeptide: MSAIREKVNISERRACRLVGLSRSVLHYDAKPDHENEVLAARLVELAHERRRFGYRRLHALVEREGTHANHKRIYRLYREAGLAVRRRRKRQGVMIEREQLALPGAPNEVWSIDFVMDALSNGRRVKCLTVVDDFTKEAVDIVVDHGISGLYVARALDRAARFRGYPKAVRTDQGPEFTSRALDQWAYANGVTLKLIQAGKPTQNAYIESFNGKFRDECLNEHWFTTLAHARAVIAAWRQDYNEQRPHSALNYLAPSEFAAKHRATADAPAAFQELV.

The Integrase catalytic domain occupies 103 to 264 (LPGAPNEVWS…APSEFAAKHR (162 aa)).

This chain is Insertion element IS407 uncharacterized 31.7 kDa protein, found in Burkholderia multivorans (strain ATCC 17616 / 249).